The following is a 666-amino-acid chain: Sodium/potassium/calcium exchanger 2 (666 aa).

The Cytoplasmic segment spans residues 1-38; the sequence is MDLHQSPTARLLQKWCSHESPFGCRRHYNSRKKLKLIR. The helical transmembrane segment at 39–59 threads the bilayer; the sequence is VIGLVMGLVAVSTVPFSISAF. Residues 60–133 lie on the Extracellular side of the membrane; it reads TETDSQSNRG…DIFSLEERRK (74 aa). Residues 63-122 are disordered; it reads DSQSNRGEASDMSGPRVAQGHRQRTLLDLNDKIRDYTPQPPASQEDQAENSTEHTQGDYP. Asn112 is a glycosylation site (N-linked (GlcNAc...) asparagine). Positions 113-122 are enriched in basic and acidic residues; the sequence is STEHTQGDYP. Residues 134–154 traverse the membrane as a helical segment; the sequence is GAIILHVIGMIYMFIALAIVC. Residues 155 to 179 lie on the Cytoplasmic side of the membrane; sequence DEFFVPSLTVITEKLGISDDVAGAT. Residues 175 to 215 form an Alpha-1 repeat; it reads VAGATFMAAGGSAPELFTSLIGVFIAHSNVGIGTIVGSAVF. A helical membrane pass occupies residues 180–200; it reads FMAAGGSAPELFTSLIGVFIA. The Extracellular segment spans residues 201 to 205; it reads HSNVG. A helical membrane pass occupies residues 206–226; that stretch reads IGTIVGSAVFNILFVIGMCAL. Residues 227 to 237 are Cytoplasmic-facing; the sequence is FSREILNLTWW. The chain crosses the membrane as a helical span at residues 238–258; sequence PLFRDVSFYIVDLLMLITFFL. Over 259–260 the chain is Extracellular; the sequence is DN. Residues 261–281 form a helical membrane-spanning segment; sequence VIMWWESLLLLTAYFAYVVFM. Topologically, residues 282 to 502 are cytoplasmic; the sequence is KFNVQVERWV…PDVRKPASRK (221 aa). Residues 311-336 are disordered; sequence KSPTAGDKDGPTLPSKPRLQRGGSSA. A phosphoserine mark is found at Ser337 and Ser341. Positions 397 to 467 are disordered; the sequence is VDENERQNGA…EEDDQPLSLS (71 aa). The segment covering 416–442 has biased composition (polar residues); sequence PNSTSTEVEMTPSSEASEPVQNGNLSH. Residues 503–523 traverse the membrane as a helical segment; that stretch reads FFPITFFGSITWIAVFSYLMV. Residues 524-538 lie on the Extracellular side of the membrane; it reads WWAHQVGETIGISEE. Residues 539–559 form a helical membrane-spanning segment; sequence IMGLTILAAGTSIPDLITSVI. The Alpha-2 repeat unit spans residues 546–577; it reads AAGTSIPDLITSVIVARKGLGDMAVSSSVGSN. Residues 560-574 are Cytoplasmic-facing; it reads VARKGLGDMAVSSSV. Residues 575-595 form a helical membrane-spanning segment; it reads GSNIFDITVGLPLPWLLYTII. The Extracellular portion of the chain corresponds to 596-607; it reads HRFSPVTVSSNG. Residues 608–628 form a helical membrane-spanning segment; that stretch reads LFCAIVLLFIMLLFVILSIAL. The Cytoplasmic segment spans residues 629–635; sequence CKWRMNK. The helical transmembrane segment at 636–656 threads the bilayer; it reads ILGFIMFGLYFVFLVVSVLLE. Residues 657-666 are Extracellular-facing; sequence DKVLVCPVSI.

The protein belongs to the Ca(2+):cation antiporter (CaCA) (TC 2.A.19) family. SLC24A subfamily.

The protein resides in the cell membrane. It carries out the reaction Ca(2+)(out) + K(+)(out) + 4 Na(+)(in) = Ca(2+)(in) + K(+)(in) + 4 Na(+)(out). Its function is as follows. Calcium, potassium:sodium antiporter that transports 1 Ca(2+) and 1 K(+) in exchange for 4 Na(+). Required for learming and memory by regulating neuronal Ca(2+), which is essential for the development of synaptic plasticity. The polypeptide is Sodium/potassium/calcium exchanger 2 (Mus musculus (Mouse)).